A 314-amino-acid polypeptide reads, in one-letter code: tRNA N6-adenosine threonylcarbamoyltransferase (314 aa).

Fe cation is bound by residues H106, H110, and Y127. Residues 127-131 (YVSGA), D159, G172, E176, and N255 contribute to the substrate site. Residue D283 participates in Fe cation binding.

It belongs to the KAE1 / TsaD family. Fe(2+) is required as a cofactor.

The protein localises to the cytoplasm. The catalysed reaction is L-threonylcarbamoyladenylate + adenosine(37) in tRNA = N(6)-L-threonylcarbamoyladenosine(37) in tRNA + AMP + H(+). Its function is as follows. Required for the formation of a threonylcarbamoyl group on adenosine at position 37 (t(6)A37) in tRNAs that read codons beginning with adenine. Is probably involved in the transfer of the threonylcarbamoyl moiety of threonylcarbamoyl-AMP (TC-AMP) to the N6 group of A37. The polypeptide is tRNA N6-adenosine threonylcarbamoyltransferase (Nanoarchaeum equitans (strain Kin4-M)).